Here is a 297-residue protein sequence, read N- to C-terminus: Probable transcription factor vicR (297 aa).

2 disordered regions span residues Leu-45 to Thr-80 and Thr-100 to His-134. The segment covering Gln-58–Ala-67 has biased composition (basic and acidic residues). A compositionally biased stretch (polar residues) spans Ala-69 to Thr-80. A compositionally biased stretch (basic and acidic residues) spans Arg-110–Ser-124.

Its subcellular location is the nucleus. Functionally, probable transcription factor; part of the gene cluster that mediates the biosynthesis of the secondary metabolite victorin, the molecular basis for Victoria blight of oats. May play a role in the regulation of the production of victorin. This Bipolaris victoriae (strain FI3) (Victoria blight of oats agent) protein is Probable transcription factor vicR.